The primary structure comprises 878 residues: Aconitate hydratase A (878 aa).

[4Fe-4S] cluster-binding residues include C426, C492, and C495.

This sequence belongs to the aconitase/IPM isomerase family. As to quaternary structure, monomer. [4Fe-4S] cluster is required as a cofactor.

It catalyses the reaction citrate = D-threo-isocitrate. The enzyme catalyses (2S,3R)-3-hydroxybutane-1,2,3-tricarboxylate = 2-methyl-cis-aconitate + H2O. It participates in carbohydrate metabolism; tricarboxylic acid cycle; isocitrate from oxaloacetate: step 2/2. Its pathway is organic acid metabolism; propanoate degradation. Its function is as follows. Involved in the catabolism of short chain fatty acids (SCFA) via the tricarboxylic acid (TCA)(acetyl degradation route) and probably the 2-methylcitrate cycle I (propionate degradation route). Catalyzes the reversible isomerization of citrate to isocitrate via cis-aconitate. Could catalyze the hydration of 2-methyl-cis-aconitate to yield (2R,3S)-2-methylisocitrate. The apo form of AcnA functions as a RNA-binding regulatory protein. This Rickettsia typhi (strain ATCC VR-144 / Wilmington) protein is Aconitate hydratase A (acnA).